A 199-amino-acid chain; its full sequence is MNKHTEHDTREHLLATGEQLCLQRGFTGMGLSELLKTAEVPKGSFYHYFRSKEAFGVAMLERHYAAYHQRLTELLQSGEGNYRDRILAYYQQTLNQFCQHGTISGCLTVKLSAEVCDLSEDMRSAMDKGARGVIALLSQALENGRENHCLTFCGEPLQQAQVLYALWLGANLQAKISRSFEPLENALAHVKNIIATPAV.

In terms of domain architecture, HTH tetR-type spans 7-67; that stretch reads HDTREHLLAT…AMLERHYAAY (61 aa). The segment at residues 30–49 is a DNA-binding region (H-T-H motif); that stretch reads GLSELLKTAEVPKGSFYHYF.

Its function is as follows. Involved in response to both electrophiles and reactive chlorine species (RCS). Represses the transcription of the nemRA-gloA operon by binding to the NemR box. This Escherichia coli O6:H1 (strain CFT073 / ATCC 700928 / UPEC) protein is HTH-type transcriptional repressor NemR (nemR).